A 309-amino-acid chain; its full sequence is Peptide methionine sulfoxide reductase MsrA/MsrB (309 aa).

A peptide methionine sulfoxide reductase A region spans residues methionine 1 to asparagine 153. Residue cysteine 8 is part of the active site. The MsrB domain maps to alanine 170–lysine 293. The Nucleophile role is filled by cysteine 282.

This sequence in the N-terminal section; belongs to the MsrA Met sulfoxide reductase family. The protein in the C-terminal section; belongs to the MsrB Met sulfoxide reductase family.

The catalysed reaction is L-methionyl-[protein] + [thioredoxin]-disulfide + H2O = L-methionyl-(S)-S-oxide-[protein] + [thioredoxin]-dithiol. The enzyme catalyses [thioredoxin]-disulfide + L-methionine + H2O = L-methionine (S)-S-oxide + [thioredoxin]-dithiol. It catalyses the reaction L-methionyl-[protein] + [thioredoxin]-disulfide + H2O = L-methionyl-(R)-S-oxide-[protein] + [thioredoxin]-dithiol. In terms of biological role, has an important function as a repair enzyme for proteins that have been inactivated by oxidation. Catalyzes the reversible oxidation-reduction of methionine sulfoxide in proteins to methionine. This chain is Peptide methionine sulfoxide reductase MsrA/MsrB (msrAB), found in Streptococcus pyogenes serotype M18 (strain MGAS8232).